We begin with the raw amino-acid sequence, 235 residues long: Exosome complex component Rrp4 (235 aa).

The S1 motif domain maps to 63-137; the sequence is GDLVIGYVTD…DEYPIILTLK (75 aa). The KH domain maps to 147–203; it reads GTVVEITPVKVPRVIGKRGSMLNTLMELGCDIVVGQNGRIWVKCKDPRDEVFLASLI.

It belongs to the RRP4 family. Component of the archaeal exosome complex. Forms a trimer of Rrp4 and/or Csl4 subunits. The trimer associates with a hexameric ring-like arrangement composed of 3 Rrp41-Rrp42 heterodimers.

The protein localises to the cytoplasm. Functionally, non-catalytic component of the exosome, which is a complex involved in RNA degradation. Increases the RNA binding and the efficiency of RNA degradation. Confers strong poly(A) specificity to the exosome. The polypeptide is Exosome complex component Rrp4 (Pyrobaculum aerophilum (strain ATCC 51768 / DSM 7523 / JCM 9630 / CIP 104966 / NBRC 100827 / IM2)).